The primary structure comprises 380 residues: Lipid-A-disaccharide synthase (380 aa).

This sequence belongs to the LpxB family.

It carries out the reaction a lipid X + a UDP-2-N,3-O-bis[(3R)-3-hydroxyacyl]-alpha-D-glucosamine = a lipid A disaccharide + UDP + H(+). The protein operates within bacterial outer membrane biogenesis; LPS lipid A biosynthesis. In terms of biological role, condensation of UDP-2,3-diacylglucosamine and 2,3-diacylglucosamine-1-phosphate to form lipid A disaccharide, a precursor of lipid A, a phosphorylated glycolipid that anchors the lipopolysaccharide to the outer membrane of the cell. The polypeptide is Lipid-A-disaccharide synthase (Azotobacter vinelandii (strain DJ / ATCC BAA-1303)).